A 263-amino-acid polypeptide reads, in one-letter code: Antigen 10-3 (263 aa).

The first 21 residues, 1-21 (MNIYLIGILCIVGLIISQGST), serve as a signal peptide directing secretion. The segment at 70-207 (GNKKDKQPTQ…QINDGTSDKP (138 aa)) is disordered. The segment covering 78 to 90 (TQKTTPKPTTPKQ) has biased composition (low complexity). A run of 5 repeats spans residues 81–107 (TTPK…TIKR), 108–134 (TTPK…TIKR), 135–161 (TTPK…TIKR), 162–188 (TTPK…TIKR), and 189–206 (TTPK…TSDK). The interval 81 to 189 (TTPKPTTPKQ…TSDTHTIKRT (109 aa)) is 5 X 27 AA tandem repeats. Composition is skewed to basic and acidic residues over residues 95 to 104 (TSDKTSDTHT), 122 to 131 (TSDKTSDTHT), 149 to 158 (TSDKTSDTHT), and 176 to 185 (TSDKTSDTHT).

The protein is Antigen 10-3 of Schistosoma mansoni (Blood fluke).